Consider the following 423-residue polypeptide: Replication factor C large subunit (423 aa).

50-57 (GPAGCGKT) provides a ligand contact to ATP.

It belongs to the activator 1 small subunits family. RfcL subfamily. As to quaternary structure, heteromultimer composed of small subunits (RfcS) and large subunits (RfcL).

In terms of biological role, part of the RFC clamp loader complex which loads the PCNA sliding clamp onto DNA. This is Replication factor C large subunit from Staphylothermus marinus (strain ATCC 43588 / DSM 3639 / JCM 9404 / F1).